The sequence spans 383 residues: S-adenosylmethionine synthase (383 aa).

His15 lines the ATP pocket. A Mg(2+)-binding site is contributed by Asp17. Glu43 lines the K(+) pocket. L-methionine-binding residues include Glu56 and Gln99. The flexible loop stretch occupies residues 99-109; sequence QSPDINQGVDR. Residues 164–166, 230–231, Asp239, 245–246, Ala262, and Lys266 each bind ATP; these read DAK, RF, and RK. Asp239 is an L-methionine binding site. Residue Lys270 coordinates L-methionine.

Belongs to the AdoMet synthase family. As to quaternary structure, homotetramer; dimer of dimers. Requires Mg(2+) as cofactor. It depends on K(+) as a cofactor.

The protein localises to the cytoplasm. It catalyses the reaction L-methionine + ATP + H2O = S-adenosyl-L-methionine + phosphate + diphosphate. It participates in amino-acid biosynthesis; S-adenosyl-L-methionine biosynthesis; S-adenosyl-L-methionine from L-methionine: step 1/1. Its function is as follows. Catalyzes the formation of S-adenosylmethionine (AdoMet) from methionine and ATP. The overall synthetic reaction is composed of two sequential steps, AdoMet formation and the subsequent tripolyphosphate hydrolysis which occurs prior to release of AdoMet from the enzyme. In Pectobacterium atrosepticum (strain SCRI 1043 / ATCC BAA-672) (Erwinia carotovora subsp. atroseptica), this protein is S-adenosylmethionine synthase.